A 57-amino-acid polypeptide reads, in one-letter code: Protein YnaL (57 aa).

A disordered region spans residues 7–57; sequence LQIPVPEPIPGDPVPVPDPIPRPQPMPDPPPDEEPIKLSHRERRSARIRAC. A compositionally biased stretch (pro residues) spans 11–35; sequence VPEPIPGDPVPVPDPIPRPQPMPDP. Basic residues predominate over residues 46–57; sequence HRERRSARIRAC.

The sequence is that of Protein YnaL from Escherichia coli (strain K12).